Here is a 1261-residue protein sequence, read N- to C-terminus: Rho GTPase-activating protein 29 (1261 aa).

Phosphoserine occurs at positions 171, 176, 179, and 190. An F-BAR domain is found at 192 to 462 (LELDNVLLKN…SAKLYDPGQE (271 aa)). The stretch at 296-418 (RKNEMEKQRK…EILAQLRTLV (123 aa)) forms a coiled coil. The interval 481–501 (NVNKHLNSSQPSGFGPANSLE) is disordered. A phosphoserine mark is found at S499, S519, and S552. The segment covering 541–559 (SESTGGSSESRSLDSESIS) has biased composition (low complexity). Residues 541-600 (SESTGGSSESRSLDSESISPGDFHRKLPRTPSSGTMSSADDLDEREPPSPSETGPNSLGT) are disordered. The Phorbol-ester/DAG-type zinc finger occupies 612 to 657 (THKFRKLRSPTKCRDCEGIVVFQGVECEECLLVCHRKCLENLVIIC). A Rho-GAP domain is found at 671–886 (AEFTQVAKKE…FLITYSQKIF (216 aa)). Residues S913 and S949 each carry the phosphoserine modification. Positions 981–1011 (SASQKIEDGKTPKPLSLKSDRSTNNVERHTP) are disordered. Basic and acidic residues predominate over residues 998–1010 (KSDRSTNNVERHT). A phosphoserine mark is found at S1019, S1144, and S1146. 2 disordered regions span residues 1117 to 1153 (HSIN…APVR) and 1178 to 1238 (GNEE…VNPM). A compositionally biased stretch (basic and acidic residues) spans 1133–1144 (RSVREASERRSS). An interaction with PTPN13/PTPL1 region spans residues 1258-1261 (PQFV).

As to quaternary structure, interacts with PTPN13/PTPL1. Interacts with RAP2A via its coiled coil domain. Interacts with RASIP1. In terms of tissue distribution, widely expressed. Highly expressed in skeletal muscle and heart. Expressed at intermediate level in placenta, liver and pancreas. Weakly expressed in brain, lung and kidney.

In terms of biological role, GTPase activator for the Rho-type GTPases by converting them to an inactive GDP-bound state. Has strong activity toward RHOA, and weaker activity toward RAC1 and CDC42. May act as a specific effector of RAP2A to regulate Rho. In concert with RASIP1, suppresses RhoA signaling and dampens ROCK and MYH9 activities in endothelial cells and plays an essential role in blood vessel tubulogenesis. This is Rho GTPase-activating protein 29 (ARHGAP29) from Homo sapiens (Human).